The sequence spans 245 residues: LOB domain-containing protein 16 (245 aa).

The 103-residue stretch at 14–116 (SPCGACKFLR…SQVMQMKAQI (103 aa)) folds into the LOB domain. Residues 162–183 (YYGHVNPNNPVSPQSSLEESFS) are disordered.

Belongs to the LOB domain-containing protein family. As to quaternary structure, homodimer and heterodimer with LBD18. Expressed in roots and faintly in shoots.

It localises to the nucleus. In terms of biological role, transcriptional activator. Involved in lateral root formation. Regulated by the transcriptional activators ARF7 and ARF19. Functions in the initiation and emergence of lateral roots, in conjunction with LBD18, downstream of ARF7 and ARF19. Acts downstream of the auxin influx carriers AUX1 and LAX1 in the regulation of lateral root initiation and development. The protein is LOB domain-containing protein 16 (LBD16) of Arabidopsis thaliana (Mouse-ear cress).